The sequence spans 328 residues: MSEKIRVLLYYKYVPIEDAQAYAAKHLEFCKSIGLKGRIIIADEGINGTVSGDYETTQKYMDWVHSDERFSDLWFKMDEEEEQAFKKMFVRYKKEIVHLGLEDNQFDEDINPLEVTGQYLNPKEFKEALLDEDTIVLDTRNDYEYDLGHFRGAVRPDIRNFRELPQWVRDNKDKFMEKRVVVYCTGGVRCEKFSGWMVREGFKDVGQLHGGIATYGKDPEVQGELWDGAMYVFDERISVPINHVDPTVISKDHFDGRPCERYVNCANPFCNKQIFASEENEAKYVRGCSPECRAHERNRYVSENGLSRQEWAARLEAIGETLPQVETV.

A Rhodanese domain is found at 130–224; it reads LDEDTIVLDT…YGKDPEVQGE (95 aa). The active-site Cysteine persulfide intermediate is the cysteine 184.

It belongs to the TrhO family.

It catalyses the reaction uridine(34) in tRNA + AH2 + O2 = 5-hydroxyuridine(34) in tRNA + A + H2O. Functionally, catalyzes oxygen-dependent 5-hydroxyuridine (ho5U) modification at position 34 in tRNAs. The polypeptide is tRNA uridine(34) hydroxylase (Streptococcus uberis (strain ATCC BAA-854 / 0140J)).